Reading from the N-terminus, the 204-residue chain is Outer-membrane lipoprotein carrier protein (204 aa).

The N-terminal stretch at 1–21 is a signal peptide; it reads MKKIAVTCALLSAFAVSSVWA. The segment at 169 to 204 is disordered; it reads QRSSYQLKSQQNGAVDMSKFTFTPPQGVTVDDQRNK. The span at 171 to 181 shows a compositional bias: polar residues; that stretch reads SSYQLKSQQNG.

The protein belongs to the LolA family. Monomer.

It is found in the periplasm. Participates in the translocation of lipoproteins from the inner membrane to the outer membrane. Only forms a complex with a lipoprotein if the residue after the N-terminal Cys is not an aspartate (The Asp acts as a targeting signal to indicate that the lipoprotein should stay in the inner membrane). The sequence is that of Outer-membrane lipoprotein carrier protein from Cronobacter sakazakii (strain ATCC BAA-894) (Enterobacter sakazakii).